The sequence spans 112 residues: M-myrmeciitoxin-Mp1 (112 aa).

A signal peptide spans 1 to 26 (MKLSCLLLTLTIIFVLTIVHAPNVEA). Residues 27-56 (KDLADPESEAVGFADAFGEADAVGEADPNA) constitute a propeptide that is removed on maturation. Residues 57-78 (GLGSVFGRLARILGRVIPKVAK) form a critical for cytotoxic activity region. The tract at residues 93 to 106 (KEAIPMAVEMAKSQ) is igE-binding determinant.

Belongs to the formicidae venom precursor-01 superfamily. Ant pilosulin family. Expressed by the venom gland.

The protein resides in the secreted. Has strong cytotoxic and hemolytic activities. Is more potent against mononuclear leukocytes than against granulocytes. The synthesized peptide 57-76 shows a potent and broad spectrum antimicrobial activity against both Gram-positive and Gram-negative bacteria, and also against the fungus C.albicans. Adopts an alpha-helical structure. The polypeptide is M-myrmeciitoxin-Mp1 (Myrmecia pilosula (Jack jumper ant)).